Reading from the N-terminus, the 178-residue chain is Cytidylate kinase (178 aa).

7 to 15 (GLPGTGTTT) serves as a coordination point for ATP.

This sequence belongs to the cytidylate kinase family. Type 2 subfamily.

The protein localises to the cytoplasm. It carries out the reaction CMP + ATP = CDP + ADP. The catalysed reaction is dCMP + ATP = dCDP + ADP. The polypeptide is Cytidylate kinase (Methanococcus maripaludis (strain DSM 14266 / JCM 13030 / NBRC 101832 / S2 / LL)).